Consider the following 197-residue polypeptide: ADP-ribosylation factor-like protein 6-interacting protein 1 (197 aa).

4 helical membrane passes run Val-43–Ile-63, Thr-64–Ser-84, Thr-129–Ile-149, and Asn-150–Asn-170.

It belongs to the ARL6ip family.

It is found in the membrane. This chain is ADP-ribosylation factor-like protein 6-interacting protein 1, found in Drosophila melanogaster (Fruit fly).